The primary structure comprises 340 residues: Glyceraldehyde-3-phosphate dehydrogenase (340 aa).

Residues 11 to 12 and glycine 109 each bind NAD(+); that span reads TI. 138–140 contacts D-glyceraldehyde 3-phosphate; that stretch reads SCN. Catalysis depends on cysteine 139, which acts as the Nucleophile. Arginine 167 contributes to the NAD(+) binding site. 193–194 is a binding site for D-glyceraldehyde 3-phosphate; that stretch reads HA. Glutamine 300 serves as a coordination point for NAD(+).

This sequence belongs to the glyceraldehyde-3-phosphate dehydrogenase family. In terms of assembly, homotetramer.

Its subcellular location is the cytoplasm. It carries out the reaction D-glyceraldehyde 3-phosphate + phosphate + NADP(+) = (2R)-3-phospho-glyceroyl phosphate + NADPH + H(+). It catalyses the reaction D-glyceraldehyde 3-phosphate + phosphate + NAD(+) = (2R)-3-phospho-glyceroyl phosphate + NADH + H(+). Its pathway is carbohydrate degradation; glycolysis; pyruvate from D-glyceraldehyde 3-phosphate: step 1/5. The chain is Glyceraldehyde-3-phosphate dehydrogenase from Saccharolobus islandicus (strain L.S.2.15 / Lassen #1) (Sulfolobus islandicus).